A 443-amino-acid polypeptide reads, in one-letter code: Deoxyguanosinetriphosphate triphosphohydrolase-like protein (443 aa).

Residues 61 to 246 (RLTHSLEVAC…MEAADDICYG (186 aa)) form the HD domain.

The protein belongs to the dGTPase family. Type 3 subfamily.

The protein is Deoxyguanosinetriphosphate triphosphohydrolase-like protein of Pseudomonas aeruginosa (strain LESB58).